The sequence spans 226 residues: RNA-binding protein 24 (226 aa).

In terms of domain architecture, RRM spans 11–88 (TKIFVGGLPY…RKANVNLAYL (78 aa)).

It localises to the nucleus. The protein localises to the cytoplasm. In terms of biological role, multifunctional RNA-binding protein involved in the regulation of pre-mRNA splicing, mRNA stability and mRNA translation important for cell fate decision and differentiation. Plays a major role in pre-mRNA alternative splicing regulation. Mediates preferentially muscle-specific exon inclusion in numerous mRNAs important for striated cardiac and skeletal muscle cell differentiation. Binds to intronic splicing enhancer (ISE) composed of stretches of GU-rich motifs localized in flanking intron of exon that will be included by alternative splicing. Involved in embryonic stem cell (ESC) transition to cardiac cell differentiation by promoting pre-mRNA alternative splicing events of several pluripotency and/or differentiation genes. Plays a role in the regulation of mRNA stability and mRNA translation to which it is bound. Involved in myogenic differentiation by regulating myog levels. Binds to a huge amount of mRNAs. Required for embryonic heart development, sarcomer and M-band formation in striated muscles. The polypeptide is RNA-binding protein 24 (rbm24) (Xenopus tropicalis (Western clawed frog)).